The chain runs to 394 residues: V-type proton ATPase subunit C (394 aa).

Position 17 is a phosphoserine (Ser-17).

It belongs to the V-ATPase C subunit family. As to quaternary structure, V-ATPase is a heteromultimeric enzyme composed of a peripheral catalytic V1 complex (components A to H) attached to an integral membrane V0 proton pore complex (components: a, c, c', c'', d, e, f and VOA1).

The protein localises to the cytoplasm. It localises to the vacuole membrane. In terms of biological role, subunit of the V1 complex of vacuolar(H+)-ATPase (V-ATPase), a multisubunit enzyme composed of a peripheral complex (V1) that hydrolyzes ATP and a membrane integral complex (V0) that translocates protons. V-ATPase is responsible for acidifying and maintaining the pH of intracellular compartments. Subunit C is necessary for the assembly of the catalytic sector of the enzyme and is likely to have a specific function in its catalytic activity. Reversibly leaves the enzyme after glucose depletion, causing the catalytic subcomplex V1 to detach from the V0 section. The protein is V-type proton ATPase subunit C of Schizosaccharomyces pombe (strain 972 / ATCC 24843) (Fission yeast).